The primary structure comprises 225 residues: Uracil-DNA glycosylase (225 aa).

Asp65 (proton acceptor) is an active-site residue.

It belongs to the uracil-DNA glycosylase (UDG) superfamily. UNG family.

The protein localises to the cytoplasm. It carries out the reaction Hydrolyzes single-stranded DNA or mismatched double-stranded DNA and polynucleotides, releasing free uracil.. In terms of biological role, excises uracil residues from the DNA which can arise as a result of misincorporation of dUMP residues by DNA polymerase or due to deamination of cytosine. The sequence is that of Uracil-DNA glycosylase from Clostridium perfringens (strain SM101 / Type A).